A 78-amino-acid chain; its full sequence is Large ribosomal subunit protein bL28 (78 aa).

Belongs to the bacterial ribosomal protein bL28 family.

The protein is Large ribosomal subunit protein bL28 of Flavobacterium johnsoniae (strain ATCC 17061 / DSM 2064 / JCM 8514 / BCRC 14874 / CCUG 350202 / NBRC 14942 / NCIMB 11054 / UW101) (Cytophaga johnsonae).